A 145-amino-acid chain; its full sequence is MTKPTEEELKQTLTDLQYAVTQENATERPFSGEYDDFYQDGIYVDIVSGEPLFSSLDKYDAGCGWPSFTKPIEKRGVKEKADFSHGMHRVEVRSQEADSHLGHVFTDGPLQEGGLRYCINAAALRFVPVADLEKEGYGEYLSLFK.

In terms of domain architecture, MsrB spans 6–129; it reads EEELKQTLTD…NAAALRFVPV (124 aa). Cysteine 118 functions as the Nucleophile in the catalytic mechanism.

The protein belongs to the MsrB Met sulfoxide reductase family.

It carries out the reaction L-methionyl-[protein] + [thioredoxin]-disulfide + H2O = L-methionyl-(R)-S-oxide-[protein] + [thioredoxin]-dithiol. This chain is Peptide methionine sulfoxide reductase MsrB, found in Enterococcus faecalis (strain ATCC 700802 / V583).